The chain runs to 387 residues: Mannitol-1-phosphate 5-dehydrogenase (387 aa).

Residue 3–14 (ALHFGAGNIGRG) coordinates NAD(+).

The protein belongs to the mannitol dehydrogenase family.

The enzyme catalyses D-mannitol 1-phosphate + NAD(+) = beta-D-fructose 6-phosphate + NADH + H(+). The sequence is that of Mannitol-1-phosphate 5-dehydrogenase from Yersinia pseudotuberculosis serotype O:1b (strain IP 31758).